Consider the following 283-residue polypeptide: Pantothenate synthetase (283 aa).

30 to 37 (MGALHRGH) contributes to the ATP binding site. The Proton donor role is filled by His-37. Gln-61 lines the (R)-pantoate pocket. Residue Gln-61 coordinates beta-alanine. Residue 147–150 (GQKD) participates in ATP binding. Residue Gln-153 coordinates (R)-pantoate. ATP contacts are provided by residues Ile-176 and 184–187 (MSSR).

The protein belongs to the pantothenate synthetase family. In terms of assembly, homodimer.

The protein localises to the cytoplasm. The catalysed reaction is (R)-pantoate + beta-alanine + ATP = (R)-pantothenate + AMP + diphosphate + H(+). It functions in the pathway cofactor biosynthesis; (R)-pantothenate biosynthesis; (R)-pantothenate from (R)-pantoate and beta-alanine: step 1/1. In terms of biological role, catalyzes the condensation of pantoate with beta-alanine in an ATP-dependent reaction via a pantoyl-adenylate intermediate. The protein is Pantothenate synthetase of Cytophaga hutchinsonii (strain ATCC 33406 / DSM 1761 / CIP 103989 / NBRC 15051 / NCIMB 9469 / D465).